Here is a 111-residue protein sequence, read N- to C-terminus: Universal stress protein B (111 aa).

Helical transmembrane passes span 1 to 21 (MIST…NMAR) and 90 to 110 (FLLT…LMIW).

Belongs to the universal stress protein B family.

Its subcellular location is the cell inner membrane. This Salmonella arizonae (strain ATCC BAA-731 / CDC346-86 / RSK2980) protein is Universal stress protein B.